Reading from the N-terminus, the 483-residue chain is uncharacterized protein (483 aa).

In terms of domain architecture, TRAM spans 11 to 71 (RYRKGDIIEL…SRYLEARAIE (61 aa)). [4Fe-4S] cluster-binding residues include Cys-84, Cys-90, Cys-93, and Cys-187. 4 residues coordinate S-adenosyl-L-methionine: Gln-312, Tyr-341, Glu-362, and Asp-412. Cys-439 serves as the catalytic Nucleophile.

This sequence belongs to the class I-like SAM-binding methyltransferase superfamily. RNA M5U methyltransferase family.

This is an uncharacterized protein from Chlorobaculum tepidum (strain ATCC 49652 / DSM 12025 / NBRC 103806 / TLS) (Chlorobium tepidum).